Here is a 479-residue protein sequence, read N- to C-terminus: MSDVTIVKEDWVQKRGEYIKNWRPRYFLLKTDGSFIGYKEKPQDVDLPYPLNNFSVAKCQLMKTERPKPNTFIIRCLQWTTVIERTFHVDTPEEREEWTEAIQAVADRLQRQEEERMNCSPTSQIDNIGEEEMDASTTHHKRKTMNDFDYLKLLGKGTFGKVILVREKASGKYYAMKILKKEVIIAKDEVAHTLTESRVLKNTRHPFLTSLKYSFQTKDRLCFVMEYVNGGELFFHLSRERVFSEDRTRFYGAEIVSALDYLHSGKIVYRDLKLENLMLDKDGHIKITDFGLCKEGITDAATMKTFCGTPEYLAPEVLEDNDYGRAVDWWGLGVVMYEMMCGRLPFYNQDHEKLFELILMEDIKFPRTLSSDAKSLLSGLLIKDPNKRLGGGPDDPKEIMRHSFFSGVNWQDVYDKKLVPPFKPQVTSETDTRYFDEEFTAQTITITPPEKDDDDGMDCMDNERRPHFPQFSYSASGRE.

Ser-2 carries the N-acetylserine modification. The region spanning 5 to 107 (TIVKEDWVQK…WTEAIQAVAD (103 aa)) is the PH domain. Cys-59 and Cys-76 form a disulfide bridge. Residues 148–405 (FDYLKLLGKG…PKEIMRHSFF (258 aa)) enclose the Protein kinase domain. Residues 154 to 162 (LGKGTFGKV) and Lys-177 each bind ATP. The active-site Proton acceptor is Asp-271. Cys-293 and Cys-307 are disulfide-bonded. Thr-302 carries an O-linked (GlcNAc) threonine glycan. At Thr-305 the chain carries Phosphothreonine; by PDPK1. Thr-309 carries O-linked (GlcNAc) threonine glycosylation. The region spanning 406-479 (SGVNWQDVYD…QFSYSASGRE (74 aa)) is the AGC-kinase C-terminal domain. Positions 446–479 (ITPPEKDDDDGMDCMDNERRPHFPQFSYSASGRE) are disordered. At Thr-447 the chain carries Phosphothreonine. Acidic residues predominate over residues 451 to 460 (KDDDDGMDCM). At Ser-472 the chain carries Phosphoserine; by PKC/PRKCZ. Ser-472 carries an O-linked (GlcNAc) serine; alternate glycan.

This sequence belongs to the protein kinase superfamily. AGC Ser/Thr protein kinase family. RAC subfamily. Interacts (via PH domain) with TCL1A; this enhances AKT3 phosphorylation and activation. Interacts with TRAF6. Interacts with KCTD20. Interacts with BTBD10. In terms of processing, phosphorylation on Thr-305 and Ser-472 is required for full activity. Phosphorylation of the activation loop at Thr-305 by PDPK1/PDK1 is a prerequisite for full activation. Phosphorylation at Ser-472 by mTORC2 in response to growth factors plays a key role in AKT1 activation by facilitating subsequent phosphorylation of the activation loop by PDPK1/PDK1. Post-translationally, ubiquitinated. When fully phosphorylated and translocated into the nucleus, undergoes 'Lys-48'-polyubiquitination catalyzed by TTC3, leading to its degradation by the proteasome. O-GlcNAcylation at Thr-302 and Thr-309 inhibits activating phosphorylation at Thr-305 via disrupting the interaction between AKT and PDPK1/PDK1.

Its subcellular location is the nucleus. It is found in the cytoplasm. It localises to the membrane. It catalyses the reaction L-seryl-[protein] + ATP = O-phospho-L-seryl-[protein] + ADP + H(+). The enzyme catalyses L-threonyl-[protein] + ATP = O-phospho-L-threonyl-[protein] + ADP + H(+). Two specific sites, one in the kinase domain (Thr-305) and the other in the C-terminal regulatory region (Ser-472), need to be phosphorylated for its full activation. IGF-1 leads to the activation of AKT3, which may play a role in regulating cell survival. AKT3 is one of 3 closely related serine/threonine-protein kinases (AKT1, AKT2 and AKT3) called the AKT kinase, and which regulate many processes including metabolism, proliferation, cell survival, growth and angiogenesis. This is mediated through serine and/or threonine phosphorylation of a range of downstream substrates. Over 100 substrate candidates have been reported so far, but for most of them, no isoform specificity has been reported. AKT3 is the least studied AKT isoform. It plays an important role in brain development and is crucial for the viability of malignant glioma cells. AKT3 isoform may also be the key molecule in up-regulation and down-regulation of MMP13 via IL13. Required for the coordination of mitochondrial biogenesis with growth factor-induced increases in cellular energy demands. Down-regulation by RNA interference reduces the expression of the phosphorylated form of BAD, resulting in the induction of caspase-dependent apoptosis. The protein is RAC-gamma serine/threonine-protein kinase (Akt3) of Rattus norvegicus (Rat).